The primary structure comprises 577 residues: Sulfite reductase [NADPH] hemoprotein beta-component (577 aa).

C441, C447, C486, and C490 together coordinate [4Fe-4S] cluster. Residue C490 coordinates siroheme.

Belongs to the nitrite and sulfite reductase 4Fe-4S domain family. As to quaternary structure, alpha(8)-beta(8). The alpha component is a flavoprotein, the beta component is a hemoprotein. Siroheme serves as cofactor. It depends on [4Fe-4S] cluster as a cofactor.

The catalysed reaction is hydrogen sulfide + 3 NADP(+) + 3 H2O = sulfite + 3 NADPH + 4 H(+). It participates in sulfur metabolism; hydrogen sulfide biosynthesis; hydrogen sulfide from sulfite (NADPH route): step 1/1. Its function is as follows. Component of the sulfite reductase complex that catalyzes the 6-electron reduction of sulfite to sulfide. This is one of several activities required for the biosynthesis of L-cysteine from sulfate. The sequence is that of Sulfite reductase [NADPH] hemoprotein beta-component from Pectobacterium atrosepticum (strain SCRI 1043 / ATCC BAA-672) (Erwinia carotovora subsp. atroseptica).